The primary structure comprises 190 residues: Adenine phosphoribosyltransferase (190 aa).

This sequence belongs to the purine/pyrimidine phosphoribosyltransferase family. In terms of assembly, homodimer.

The protein resides in the cytoplasm. The enzyme catalyses AMP + diphosphate = 5-phospho-alpha-D-ribose 1-diphosphate + adenine. It functions in the pathway purine metabolism; AMP biosynthesis via salvage pathway; AMP from adenine: step 1/1. Its function is as follows. Catalyzes a salvage reaction resulting in the formation of AMP, that is energically less costly than de novo synthesis. The chain is Adenine phosphoribosyltransferase from Cupriavidus metallidurans (strain ATCC 43123 / DSM 2839 / NBRC 102507 / CH34) (Ralstonia metallidurans).